Consider the following 131-residue polypeptide: Large ribosomal subunit protein bL17 (131 aa).

Belongs to the bacterial ribosomal protein bL17 family. In terms of assembly, part of the 50S ribosomal subunit. Contacts protein L32.

This Finegoldia magna (strain ATCC 29328 / DSM 20472 / WAL 2508) (Peptostreptococcus magnus) protein is Large ribosomal subunit protein bL17.